Reading from the N-terminus, the 157-residue chain is Protein Smg (157 aa).

It belongs to the Smg family.

In Pectobacterium atrosepticum (strain SCRI 1043 / ATCC BAA-672) (Erwinia carotovora subsp. atroseptica), this protein is Protein Smg.